A 119-amino-acid polypeptide reads, in one-letter code: Acidic phospholipase A2 DE-III (119 aa).

Intrachain disulfides connect Cys11–Cys72, Cys26–Cys118, Cys28–Cys44, Cys43–Cys99, Cys50–Cys92, Cys60–Cys85, and Cys79–Cys90. Tyr27, Gly29, and Gly31 together coordinate Ca(2+). His47 is an active-site residue. Asp48 is a Ca(2+) binding site. Asp93 is an active-site residue.

It belongs to the phospholipase A2 family. Group I subfamily. D49 sub-subfamily. Ca(2+) serves as cofactor. Expressed by the venom gland.

The protein resides in the secreted. The enzyme catalyses a 1,2-diacyl-sn-glycero-3-phosphocholine + H2O = a 1-acyl-sn-glycero-3-phosphocholine + a fatty acid + H(+). Its function is as follows. PLA2 catalyzes the calcium-dependent hydrolysis of the 2-acyl groups in 3-sn-phosphoglycerides. The chain is Acidic phospholipase A2 DE-III from Naja melanoleuca (Forest cobra).